A 109-amino-acid polypeptide reads, in one-letter code: uncharacterized protein (109 aa).

This is an uncharacterized protein from Microplitis demolitor bracovirus (isolate Webb) (MdBV).